A 551-amino-acid chain; its full sequence is Cation/acetate symporter ActP (551 aa).

A run of 13 helical transmembrane segments spans residues isoleucine 34 to alanine 54, glycine 77 to valine 97, glycine 104 to glutamate 124, leucine 150 to alanine 170, valine 184 to alanine 204, tryptophan 207 to valine 227, isoleucine 263 to leucine 283, glycine 304 to valine 324, phenylalanine 356 to leucine 376, valine 406 to glutamate 426, isoleucine 430 to phenylalanine 450, leucine 469 to leucine 489, and tyrosine 498 to isoleucine 518.

This sequence belongs to the sodium:solute symporter (SSF) (TC 2.A.21) family.

Its subcellular location is the cell inner membrane. In terms of biological role, transports acetate. The protein is Cation/acetate symporter ActP of Yersinia enterocolitica serotype O:8 / biotype 1B (strain NCTC 13174 / 8081).